A 1479-amino-acid chain; its full sequence is Type VII secretion system protein EssC (1479 aa).

The Cytoplasmic segment spans residues 1 to 229 (MHKLIIKYNK…RPPQPIQKNN (229 aa)). Residues 230–252 (TVIWRSIIPPLVMIALTVVIFLV) traverse the membrane as a helical segment. The Extracellular segment spans residues 253–256 (RPIG). A helical membrane pass occupies residues 257 to 279 (IYILMMIGMSTVTIVFGITTYFS). Topologically, residues 280-1479 (EKKKYNKDVE…QAYQKIRWFK (1200 aa)) are cytoplasmic. 2 FtsK domains span residues 652–846 (DDIL…QDSN) and 997–1183 (QGPM…SEVS). Residues 672-679 (GTTGSGKS) and 1014-1021 (GSPGYGRT) each bind ATP.

It belongs to the EssC family. As to quaternary structure, homooligomer. Interacts with EsaE.

It localises to the cell membrane. In terms of biological role, component of the type VII secretion system (Ess). Required for the secretion of substrates including EsxA and EsxB. However, unable to support secretion of the substrate protein EsxC. In Staphylococcus aureus (strain Mu50 / ATCC 700699), this protein is Type VII secretion system protein EssC.